Reading from the N-terminus, the 257-residue chain is 4-chloro-allylglycine synthase (257 aa).

E112, H119, E173, H203, E207, and H210 together coordinate Fe cation.

Fe(2+) is required as a cofactor.

It carries out the reaction 4-chloro-L-lysine + AH2 + O2 = L-2-amino-4-chloropent-4-enoate + formaldehyde + A + NH4(+) + H2O. It participates in amino-acid metabolism. It functions in the pathway antibiotic biosynthesis. In terms of biological role, involved in the biosynthesis of terminal alkyne-containing amino acids such as L-propargylglycine (Pra) and L-beta-ethynylserine, that are produced as antibiotics by S.cattleya. Catalyzes an oxidative C-C bond cleavage in 4-chloro-L-lysine to form 4-chloro-allyl-L-glycine (also named L-2-amino-4-chloropent-4-enoate), with release of formaldehyde and ammonia. Is also able to react with L-lysine directly to produce allylglycine in vitro. The chain is 4-chloro-allylglycine synthase from Streptantibioticus cattleyicolor (strain ATCC 35852 / DSM 46488 / JCM 4925 / NBRC 14057 / NRRL 8057) (Streptomyces cattleya).